The primary structure comprises 78 residues: Protein EcdD (78 aa).

Involved in the non-oxidative decarboxylation and detoxification of phenolic derivatives under anaerobic conditions, however the precise biochemical function in metabolism of phenolic acid is unknown. The chain is Protein EcdD from Escherichia coli O157:H7.